Here is an 87-residue protein sequence, read N- to C-terminus: Small ribosomal subunit protein uS19 (87 aa).

The protein belongs to the universal ribosomal protein uS19 family.

Protein S19 forms a complex with S13 that binds strongly to the 16S ribosomal RNA. The polypeptide is Small ribosomal subunit protein uS19 (rpsS) (Mycoplasma genitalium (strain ATCC 33530 / DSM 19775 / NCTC 10195 / G37) (Mycoplasmoides genitalium)).